Reading from the N-terminus, the 368-residue chain is MINLGDKQSIIVVAMSGGVDSAAVAAMLHAQGYNVIGITLQLYDHGMAVGKKNACCAGQDIYDAKMVANKLGIPHYVLDYESKFKESVIENFVDSYLQGETPLPCVQCNKSVKFKDLIKTAKELGAAQLATGHYVRKINGDNGAELHIGIDPAKDQSYFLFTTTKEQLDYLSFPLGWFTKDETRKLASKFGLEVANKPDSQDICFVPDGNYKNVINKIRPGSSKKGKIIHVNGFELGEHSGIINYTIGQRRGLGIAYNEPLYVIKIDPNNNIVYVGPESALNMQEFIIKDVNWLADEIKDNEKLEVAVKIRSTRLPSLAEISKLGDDKMKVKFLSEEKAVAPGQACVIYDGERVLGGGWITRDIIITL.

ATP contacts are provided by residues 14–21 (AMSGGVDS) and Leu40. The active-site Nucleophile is Cys108. Residues Cys108 and Cys204 are joined by a disulfide bond. Gly132 is a binding site for ATP. Positions 154 to 156 (KDQ) are interaction with tRNA. Residue Cys204 is the Cysteine persulfide intermediate of the active site.

It belongs to the MnmA/TRMU family.

Its subcellular location is the cytoplasm. It carries out the reaction S-sulfanyl-L-cysteinyl-[protein] + uridine(34) in tRNA + AH2 + ATP = 2-thiouridine(34) in tRNA + L-cysteinyl-[protein] + A + AMP + diphosphate + H(+). Catalyzes the 2-thiolation of uridine at the wobble position (U34) of tRNA, leading to the formation of s(2)U34. This is tRNA-specific 2-thiouridylase MnmA from Rickettsia canadensis (strain McKiel).